The sequence spans 259 residues: Leucine-rich repeat-containing protein 61 (259 aa).

LRR repeat units follow at residues 32 to 53 (SILL…GECL), 54 to 75 (GLEW…ASLR), 76 to 97 (QLAV…ATCE), and 98 to 119 (NLQS…QCLA). An LRRCT domain is found at 138–178 (NPLCANPSYWAAVRELLPGLKVIDGERVIGRGSEFYQLCRD).

The polypeptide is Leucine-rich repeat-containing protein 61 (LRRC61) (Homo sapiens (Human)).